Consider the following 110-residue polypeptide: Phosphoribosyl-ATP pyrophosphatase (110 aa).

This sequence belongs to the PRA-PH family.

Its subcellular location is the cytoplasm. It catalyses the reaction 1-(5-phospho-beta-D-ribosyl)-ATP + H2O = 1-(5-phospho-beta-D-ribosyl)-5'-AMP + diphosphate + H(+). It functions in the pathway amino-acid biosynthesis; L-histidine biosynthesis; L-histidine from 5-phospho-alpha-D-ribose 1-diphosphate: step 2/9. The polypeptide is Phosphoribosyl-ATP pyrophosphatase (Clostridium botulinum (strain Kyoto / Type A2)).